A 318-amino-acid polypeptide reads, in one-letter code: NADH-ubiquinone oxidoreductase chain 1 (318 aa).

The next 8 membrane-spanning stretches (helical) occupy residues 3-23 (FINI…LTLV), 70-90 (LFII…IPLP), 100-120 (LGML…LWSG), 146-166 (MAII…QMLI), 171-191 (HIWL…STLA), 231-251 (IILM…HINY), 254-273 (LYST…FLWI), and 294-314 (LPLT…LAGI).

The protein belongs to the complex I subunit 1 family. In terms of assembly, core subunit of respiratory chain NADH dehydrogenase (Complex I) which is composed of 45 different subunits.

The protein resides in the mitochondrion inner membrane. The catalysed reaction is a ubiquinone + NADH + 5 H(+)(in) = a ubiquinol + NAD(+) + 4 H(+)(out). Core subunit of the mitochondrial membrane respiratory chain NADH dehydrogenase (Complex I) which catalyzes electron transfer from NADH through the respiratory chain, using ubiquinone as an electron acceptor. Essential for the catalytic activity and assembly of complex I. The polypeptide is NADH-ubiquinone oxidoreductase chain 1 (Rattus norvegicus (Rat)).